We begin with the raw amino-acid sequence, 144 residues long: Large ribosomal subunit protein uL15 (144 aa).

The interval 1–59 is disordered; sequence MHLNTLAPAPGAKKSSKRVGRGMGSGLGKTGGRGHKGQKSRSGGSVKPGFEGGQMPIQR. The span at 21–31 shows a compositional bias: gly residues; it reads RGMGSGLGKTG.

It belongs to the universal ribosomal protein uL15 family. In terms of assembly, part of the 50S ribosomal subunit.

Its function is as follows. Binds to the 23S rRNA. The sequence is that of Large ribosomal subunit protein uL15 from Pseudoalteromonas atlantica (strain T6c / ATCC BAA-1087).